A 63-amino-acid chain; its full sequence is Cysteine-rich peptide clone 2 (63 aa).

A signal peptide spans 1–23 (MHFSGVVLILLSMTLVNFVFVET). 3 disulfide bridges follow: Cys-33–Cys-53, Cys-38–Cys-58, and Cys-42–Cys-60.

As to expression, expressed by the venom gland.

It is found in the secreted. This is Cysteine-rich peptide clone 2 from Tityus costatus (Brazilian scorpion).